The chain runs to 213 residues: EEF1A lysine methyltransferase 1 (213 aa).

This sequence belongs to the class I-like SAM-binding methyltransferase superfamily. EFM5 family.

The protein resides in the cytoplasm. It carries out the reaction L-lysyl-[protein] + 3 S-adenosyl-L-methionine = N(6),N(6),N(6)-trimethyl-L-lysyl-[protein] + 3 S-adenosyl-L-homocysteine + 3 H(+). Protein-lysine methyltransferase that selectively catalyzes the trimethylation of EEF1A at 'Lys-79'. This chain is EEF1A lysine methyltransferase 1, found in Gallus gallus (Chicken).